The chain runs to 184 residues: J-type co-chaperone JAC1, mitochondrial (184 aa).

The N-terminal 10 residues, 1 to 10, are a transit peptide targeting the mitochondrion; the sequence is MLKYLVQRRF. Residues 13–82 form the J domain; the sequence is TFYELFPKTF…LRRSQYMLKL (70 aa). Positions 48–50 match the HSP70 binding motif; the sequence is HPD. An interaction with ISU1 region spans residues 71-184; the sequence is DPLRRSQYML…APGKQLEMNH (114 aa).

It belongs to the HscB family. In terms of assembly, interacts with ISU1 and SSQ1.

It localises to the mitochondrion matrix. In terms of biological role, co-chaperone required for the assembly of iron-sulfur (Fe/S) clusters in mitochondria. Stimulates the ATPase activity of its specialized Hsp70 chaperone partner SSQ1, to mediate the transfer of iron-sulfur clusters from ISU1 to GRX5. Binds to the substrate protein ISU1 and targets it to SSQ1. The protein is J-type co-chaperone JAC1, mitochondrial of Saccharomyces cerevisiae (strain ATCC 204508 / S288c) (Baker's yeast).